The primary structure comprises 316 residues: ATP synthase gamma chain (316 aa).

It belongs to the ATPase gamma chain family. F-type ATPases have 2 components, CF(1) - the catalytic core - and CF(0) - the membrane proton channel. CF(1) has five subunits: alpha(3), beta(3), gamma(1), delta(1), epsilon(1). CF(0) has three main subunits: a, b and c.

It localises to the cellular thylakoid membrane. In terms of biological role, produces ATP from ADP in the presence of a proton gradient across the membrane. The gamma chain is believed to be important in regulating ATPase activity and the flow of protons through the CF(0) complex. The protein is ATP synthase gamma chain of Prochlorococcus marinus (strain MIT 9211).